A 218-amino-acid polypeptide reads, in one-letter code: Glycerol-3-phosphate acyltransferase (218 aa).

6 helical membrane-spanning segments follow: residues phenylalanine 3–alanine 23, glycine 53–isoleucine 73, phenylalanine 82–phenylalanine 102, leucine 112–valine 132, isoleucine 142–leucine 162, and glutamate 166–histidine 186.

This sequence belongs to the PlsY family. In terms of assembly, probably interacts with PlsX.

The protein localises to the cell inner membrane. It catalyses the reaction an acyl phosphate + sn-glycerol 3-phosphate = a 1-acyl-sn-glycero-3-phosphate + phosphate. It functions in the pathway lipid metabolism; phospholipid metabolism. In terms of biological role, catalyzes the transfer of an acyl group from acyl-phosphate (acyl-PO(4)) to glycerol-3-phosphate (G3P) to form lysophosphatidic acid (LPA). This enzyme utilizes acyl-phosphate as fatty acyl donor, but not acyl-CoA or acyl-ACP. The chain is Glycerol-3-phosphate acyltransferase from Leptospira borgpetersenii serovar Hardjo-bovis (strain JB197).